A 523-amino-acid polypeptide reads, in one-letter code: 2-isopropylmalate synthase (523 aa).

One can recognise a Pyruvate carboxyltransferase domain in the interval 5–267; the sequence is VIIFDTTLRD…HTNINHHEIW (263 aa). Mn(2+) is bound by residues Asp14, His202, His204, and Asn238. The regulatory domain stretch occupies residues 392-523; that stretch reads RLDYFSVQSG…QNKENNKETV (132 aa).

Belongs to the alpha-IPM synthase/homocitrate synthase family. LeuA type 1 subfamily. In terms of assembly, homodimer. Mn(2+) is required as a cofactor.

The protein localises to the cytoplasm. The enzyme catalyses 3-methyl-2-oxobutanoate + acetyl-CoA + H2O = (2S)-2-isopropylmalate + CoA + H(+). It participates in amino-acid biosynthesis; L-leucine biosynthesis; L-leucine from 3-methyl-2-oxobutanoate: step 1/4. Catalyzes the condensation of the acetyl group of acetyl-CoA with 3-methyl-2-oxobutanoate (2-ketoisovalerate) to form 3-carboxy-3-hydroxy-4-methylpentanoate (2-isopropylmalate). The chain is 2-isopropylmalate synthase from Salmonella newport (strain SL254).